A 437-amino-acid chain; its full sequence is Ribosomal protein uS12 methylthiotransferase RimO (437 aa).

Positions 4 to 114 (PRVSFVSLGC…VMSAVHEAVP (111 aa)) constitute an MTTase N-terminal domain. [4Fe-4S] cluster-binding residues include Cys-13, Cys-49, Cys-78, Cys-145, Cys-149, and Cys-152. One can recognise a Radical SAM core domain in the interval 131 to 369 (LTPRHYAYLK…MAKQQQISTN (239 aa)). Residues 372–437 (KKKVGKRLPV…DAYDLHGIAV (66 aa)) form the TRAM domain.

The protein belongs to the methylthiotransferase family. RimO subfamily. [4Fe-4S] cluster is required as a cofactor.

Its subcellular location is the cytoplasm. The enzyme catalyses L-aspartate(89)-[ribosomal protein uS12]-hydrogen + (sulfur carrier)-SH + AH2 + 2 S-adenosyl-L-methionine = 3-methylsulfanyl-L-aspartate(89)-[ribosomal protein uS12]-hydrogen + (sulfur carrier)-H + 5'-deoxyadenosine + L-methionine + A + S-adenosyl-L-homocysteine + 2 H(+). Its function is as follows. Catalyzes the methylthiolation of an aspartic acid residue of ribosomal protein uS12. This chain is Ribosomal protein uS12 methylthiotransferase RimO, found in Brucella anthropi (strain ATCC 49188 / DSM 6882 / CCUG 24695 / JCM 21032 / LMG 3331 / NBRC 15819 / NCTC 12168 / Alc 37) (Ochrobactrum anthropi).